The sequence spans 91 residues: Small ribosomal subunit protein bS16 (91 aa).

The protein belongs to the bacterial ribosomal protein bS16 family.

This is Small ribosomal subunit protein bS16 from Staphylococcus haemolyticus (strain JCSC1435).